The primary structure comprises 141 residues: Transcription antitermination protein NusB (141 aa).

This sequence belongs to the NusB family.

Functionally, involved in transcription antitermination. Required for transcription of ribosomal RNA (rRNA) genes. Binds specifically to the boxA antiterminator sequence of the ribosomal RNA (rrn) operons. This is Transcription antitermination protein NusB from Treponema pallidum (strain Nichols).